The primary structure comprises 211 residues: Arginine exporter protein ArgO (211 aa).

Transmembrane regions (helical) follow at residues 1-21 (MISY…PLGP), 37-57 (LMIA…GIFG), 68-88 (LLAL…FGAL), 111-131 (IIAT…DTFV), 147-167 (WFAL…ALLA), and 179-199 (AQRI…FQLA).

This sequence belongs to the LysE/ArgO transporter (TC 2.A.75) family.

The protein localises to the cell inner membrane. The enzyme catalyses L-arginine(in) = L-arginine(out). In terms of biological role, involved in the export of arginine. Important to control the intracellular level of arginine and the correct balance between arginine and lysine. In Salmonella schwarzengrund (strain CVM19633), this protein is Arginine exporter protein ArgO.